The chain runs to 245 residues: Enolase-phosphatase E1 (245 aa).

It belongs to the HAD-like hydrolase superfamily. MasA/MtnC family. Monomer. Mg(2+) serves as cofactor.

The catalysed reaction is 5-methylsulfanyl-2,3-dioxopentyl phosphate + H2O = 1,2-dihydroxy-5-(methylsulfanyl)pent-1-en-3-one + phosphate. The protein operates within amino-acid biosynthesis; L-methionine biosynthesis via salvage pathway; L-methionine from S-methyl-5-thio-alpha-D-ribose 1-phosphate: step 3/6. It functions in the pathway amino-acid biosynthesis; L-methionine biosynthesis via salvage pathway; L-methionine from S-methyl-5-thio-alpha-D-ribose 1-phosphate: step 4/6. In terms of biological role, bifunctional enzyme that catalyzes the enolization of 2,3-diketo-5-methylthiopentyl-1-phosphate (DK-MTP-1-P) into the intermediate 2-hydroxy-3-keto-5-methylthiopentenyl-1-phosphate (HK-MTPenyl-1-P), which is then dephosphorylated to form the acireductone 1,2-dihydroxy-3-keto-5-methylthiopentene (DHK-MTPene). The sequence is that of Enolase-phosphatase E1 from Parasynechococcus marenigrum (strain WH8102).